The chain runs to 666 residues: Probable potassium transport system protein Kup (666 aa).

The next 12 membrane-spanning stretches (helical) occupy residues 16 to 36 (GFII…LYTI), 58 to 78 (ISLI…LIAL), 100 to 120 (PWLI…GALT), 141 to 161 (IYQN…VLFG), 165 to 185 (FGTG…FSFL), 221 to 241 (IFIL…YSDL), 253 to 273 (WPFV…WILA), 294 to 314 (VYLV…LISG), 343 to 363 (LYIP…VLAF), 373 to 393 (YGLA…YYLI), 399 to 419 (PILA…FFLA), and 424 to 444 (FMHG…VMFI).

Belongs to the HAK/KUP transporter (TC 2.A.72) family.

Its subcellular location is the cell membrane. It catalyses the reaction K(+)(in) + H(+)(in) = K(+)(out) + H(+)(out). In terms of biological role, transport of potassium into the cell. Likely operates as a K(+):H(+) symporter. The polypeptide is Probable potassium transport system protein Kup (Streptococcus pyogenes serotype M1).